We begin with the raw amino-acid sequence, 253 residues long: CD151 antigen (253 aa).

The Cytoplasmic segment spans residues methionine 1–tyrosine 18. S-palmitoyl cysteine attachment occurs at residues cysteine 11 and cysteine 15. A helical transmembrane segment spans residues leucine 19–isoleucine 39. The Extracellular segment spans residues tryptophan 40–tyrosine 57. A helical transmembrane segment spans residues leucine 58–glycine 78. Residues cysteine 79–arginine 91 are Cytoplasmic-facing. Residues leucine 92–tyrosine 112 traverse the membrane as a helical segment. Residues valine 113–arginine 221 lie on the Extracellular side of the membrane. The N-linked (GlcNAc...) asparagine glycan is linked to asparagine 159. Residues valine 222–cysteine 242 form a helical membrane-spanning segment. 2 S-palmitoyl cysteine lipidation sites follow: cysteine 242 and cysteine 243. The Cytoplasmic portion of the chain corresponds to cysteine 243 to tyrosine 253.

Belongs to the tetraspanin (TM4SF) family. In terms of assembly, interacts with integrins ITGA3:ITGB1, ITGA5:ITGB1, ITGA3:ITGB1 and ITGA6:ITGB4 and with CD9 and CD181. Interacts (via the second extracellular domain) with integrin ITGAV:ITGB3. Interacts with ITGA3; this interaction modulates ITGA3 glycosylation pattern. Interacts with F11R. Interacts with RAC1 and CDC42; these interactions mediate physical association of RAC1 and CDC42 with integrin adhesion receptor complexes. Palmitoylated. Palmitoylation by ZDHHC2 regulates CD151 expression, association with other tetraspanin family proteins and function in cell adhesion. Post-translationally, ubiquitinated by RNF128 on lysine residues present in the tetraspanin amino terminus via 'Lys-48'-linked ubiquitin leading to proteasomal degradation.

The protein localises to the cell membrane. In terms of biological role, structural component of specialized membrane microdomains known as tetraspanin-enriched microdomains (TERMs), which act as platforms for receptor clustering and signaling. Plays a role in various cellular and molecular mechanism through its association with both integrin and non-integrin proteins. These interactions facilitate critical cellular functions, including cell-to-cell communication, wound healing, platelet aggregation, trafficking, cell motility, and angiogenesis. Via interaction with JAM-A/F11R and integrin ITGA3:ITGB1, promotes the recruitment of signaling molecules such as RAC1, CDC42 and RhoGTPases to facilitate the polarization of epithelial cells and the reorganization of the actin cytoskeleton, which are critical steps in cell migration process. Regulates the glycosylation pattern of ITGA3:ITGB1 thereby modulating its activity. Plays an essential role in the maintenance of central laminin-binding integrin ITGA6:ITGB4-containing adhesion complexes. Essential for the proper assembly of the glomerular and tubular basement membranes in kidney. Contributes to T-cell activation by modulating integrin signaling leading to activation of downstream targets PTK2 and MAPK1/MAPK3. The polypeptide is CD151 antigen (Cd151) (Mus musculus (Mouse)).